The sequence spans 321 residues: MDLHESESRTHVLSTDGDDGYIDMEVNLSSSSSSSTSSSSFFSFPVTSSPPQSREFEFQMCSSAVASGESTTSPADELFYKGQLLPLHLPPRLKMVQKLLLASSSSTAATETPISPRAAADVLSPRRFSSCEIGQDENCFFEISTELKRFIESNENHLGNSWSKKIKHSSITQKLKASRAYIKALFSKQACSDSSEINPRFKIEPSKVSRKKNPFVNSENPLLIHRRSFSGVIQRHSQAKCSTSSSSSSSASSLSSSFSFGSNGSLDLQTLMRSSNASDNSIEGAIEHCKQSFTTRKSNVTESELCSSRTSVSTCGDLDKD.

The span at 297–314 (KSNVTESELCSSRTSVST) shows a compositional bias: polar residues. Positions 297–321 (KSNVTESELCSSRTSVSTCGDLDKD) are disordered.

It is found in the cell membrane. The polypeptide is Probable membrane-associated kinase regulator 3 (MAKR3) (Arabidopsis thaliana (Mouse-ear cress)).